The primary structure comprises 160 residues: Cyanate hydratase (160 aa).

Catalysis depends on residues R100, E103, and S126.

Belongs to the cyanase family.

The enzyme catalyses cyanate + hydrogencarbonate + 3 H(+) = NH4(+) + 2 CO2. In terms of biological role, catalyzes the reaction of cyanate with bicarbonate to produce ammonia and carbon dioxide. The sequence is that of Cyanate hydratase from Emericella nidulans (strain FGSC A4 / ATCC 38163 / CBS 112.46 / NRRL 194 / M139) (Aspergillus nidulans).